Reading from the N-terminus, the 118-residue chain is Large ribosomal subunit protein bL20 (118 aa).

Belongs to the bacterial ribosomal protein bL20 family.

Functionally, binds directly to 23S ribosomal RNA and is necessary for the in vitro assembly process of the 50S ribosomal subunit. It is not involved in the protein synthesizing functions of that subunit. In Phenylobacterium zucineum (strain HLK1), this protein is Large ribosomal subunit protein bL20.